The chain runs to 79 residues: Antimicrobial peptide UyCT1 (79 aa).

The first 23 residues, 1–23 (MKTQLAFLAITVILMQLFAQTEA), serve as a signal peptide directing secretion. At isoleucine 37 the chain carries Isoleucine amide. The propeptide occupies 41-79 (GLRNVDQIADLFDSGLSDADDLFDSGLSDADAKFMKMFM).

The protein belongs to the non-disulfide-bridged peptide (NDBP) superfamily. Short antimicrobial peptide (group 4) family. Expressed by the venom gland.

It localises to the secreted. Its subcellular location is the target cell membrane. Inhibits the growth of Gram-positive (S.aureus, MIC=15 uM) and Gram-negative bacteria (E.coli, MIC=10 uM and P.aeruginosa, MIC=10 uM). It also shows 26% of hemolysis when 15 uM are tested (81% at 50 uM). Functionally, inhibits the growth of Gram-negative bacteria (E.coli, MIC=25 uM and P.aeruginosa, MIC=40 uM). It also shows 7% of hemolysis when 50 uM are tested. Does not show activity against the Gram-positive bacteria S.aureus. This is Antimicrobial peptide UyCT1 from Urodacus yaschenkoi (Inland robust scorpion).